A 225-amino-acid polypeptide reads, in one-letter code: Large ribosomal subunit protein mL58 (225 aa).

Positions 106 to 138 (PQAPITTPESSSTDAAAADQHGDLPPVLYNPTK) are disordered. A compositionally biased stretch (polar residues) spans 109–119 (PITTPESSSTD).

Belongs to the mitochondrion-specific ribosomal protein mL58 family. In terms of assembly, component of the mitochondrial large ribosomal subunit (mt-LSU). Mature N.crassa 74S mitochondrial ribosomes consist of a small (37S) and a large (54S) subunit. The 37S small subunit contains a 16S ribosomal RNA (16S mt-rRNA) and 32 different proteins. The 54S large subunit contains a 23S rRNA (23S mt-rRNA) and 42 different proteins.

The protein resides in the mitochondrion. Component of the mitochondrial ribosome (mitoribosome), a dedicated translation machinery responsible for the synthesis of mitochondrial genome-encoded proteins, including at least some of the essential transmembrane subunits of the mitochondrial respiratory chain. The mitoribosomes are attached to the mitochondrial inner membrane and translation products are cotranslationally integrated into the membrane. This Neurospora crassa (strain ATCC 24698 / 74-OR23-1A / CBS 708.71 / DSM 1257 / FGSC 987) protein is Large ribosomal subunit protein mL58 (mrpl20).